Here is a 123-residue protein sequence, read N- to C-terminus: Preprofallaxidin-3 (123 aa).

Positions 1–22 (MASLKKSLFLVLFLGLVSLSIC) are cleaved as a signal peptide. Residues 23–46 (EEKKRENEDDAEDENHEEESEEKR) constitute a propeptide that is removed on maturation. The tract at residues 26 to 46 (KRENEDDAEDENHEEESEEKR) is disordered. Residues 30–42 (EDDAEDENHEEES) show a composition bias toward acidic residues. Position 62 is a leucine amide (L62). Positions 66 to 70 (SEEKR) are excised as a propeptide. F74 is subject to Phenylalanine amide. A propeptide spanning residues 78–82 (SEEKR) is cleaved from the precursor. F88 carries the phenylalanine amide modification. The propeptide occupies 92-96 (SEEKR). I102 bears the Isoleucine amide mark. Residues 106–110 (SEEKR) constitute a propeptide that is removed on maturation. I116 bears the Isoleucine amide mark. The propeptide occupies 120 to 123 (KKKK).

It belongs to the frog skin active peptide (FSAP) family. Brevinin subfamily. As to expression, expressed by the skin glands.

It localises to the secreted. Functionally, fallaxidin-1.1 shows no antibacterial activity against Gram-positive or Gram-negative bacteria. Does not inhibit the formation of NO by neuronal nitric oxide synthase. Has no effect on splenocyte proliferation or smooth muscle contraction. In terms of biological role, fallaxidin-1.2 shows no antibacterial activity against Gram-positive or Gram-negative bacteria. Does not inhibit the formation of NO by neuronal nitric oxide synthase. Has no effect on splenocyte proliferation or smooth muscle contraction. Its function is as follows. Fallaxidin-1.3 shows no antibacterial activity against Gram-positive or Gram-negative bacteria. Does not inhibit the formation of NO by neuronal nitric oxide synthase. Has no effect on splenocyte proliferation or smooth muscle contraction. Fallaxidin-3.2 shows antibacterial activity against the Gram-positive bacteria E.faecalis (MIC=100 uM) and L.lactis (MIC=500 uM). No antibacterial activity against the Gram-positive bacteria B.cereus, L.innocua, M.luteus, S.epidermidis, S.uberis and S.aureus, or the Gram-negative bacteria E.cloacae and E.coli. In Litoria fallax (Eastern dwarf tree frog), this protein is Preprofallaxidin-3.